A 122-amino-acid chain; its full sequence is Large ribosomal subunit protein uL18 (122 aa).

The tract at residues 1–25 (MSTLSRKQQTQKRHRRLRRHLSGTA) is disordered. Residues 9-21 (QTQKRHRRLRRHL) show a composition bias toward basic residues.

The protein belongs to the universal ribosomal protein uL18 family. In terms of assembly, part of the 50S ribosomal subunit; part of the 5S rRNA/L5/L18/L25 subcomplex. Contacts the 5S and 23S rRNAs.

Its function is as follows. This is one of the proteins that bind and probably mediate the attachment of the 5S RNA into the large ribosomal subunit, where it forms part of the central protuberance. This is Large ribosomal subunit protein uL18 from Synechococcus sp. (strain CC9311).